The primary structure comprises 514 residues: ATP synthase subunit alpha (514 aa).

170–177 contributes to the ATP binding site; that stretch reads GDRQIGKT.

The protein belongs to the ATPase alpha/beta chains family. In terms of assembly, F-type ATPases have 2 components, CF(1) - the catalytic core - and CF(0) - the membrane proton channel. CF(1) has five subunits: alpha(3), beta(3), gamma(1), delta(1), epsilon(1). CF(0) has three main subunits: a(1), b(2) and c(9-12). The alpha and beta chains form an alternating ring which encloses part of the gamma chain. CF(1) is attached to CF(0) by a central stalk formed by the gamma and epsilon chains, while a peripheral stalk is formed by the delta and b chains.

Its subcellular location is the cell inner membrane. The enzyme catalyses ATP + H2O + 4 H(+)(in) = ADP + phosphate + 5 H(+)(out). Functionally, produces ATP from ADP in the presence of a proton gradient across the membrane. The alpha chain is a regulatory subunit. The chain is ATP synthase subunit alpha from Stutzerimonas stutzeri (strain A1501) (Pseudomonas stutzeri).